Reading from the N-terminus, the 201-residue chain is Dephospho-CoA kinase (201 aa).

One can recognise a DPCK domain in the interval serine 4–glutamine 201. Residue alanine 12–threonine 17 coordinates ATP.

This sequence belongs to the CoaE family.

Its subcellular location is the cytoplasm. The catalysed reaction is 3'-dephospho-CoA + ATP = ADP + CoA + H(+). Its pathway is cofactor biosynthesis; coenzyme A biosynthesis; CoA from (R)-pantothenate: step 5/5. In terms of biological role, catalyzes the phosphorylation of the 3'-hydroxyl group of dephosphocoenzyme A to form coenzyme A. In Legionella pneumophila subsp. pneumophila (strain Philadelphia 1 / ATCC 33152 / DSM 7513), this protein is Dephospho-CoA kinase.